A 439-amino-acid chain; its full sequence is uncharacterized protein (439 aa).

The N-terminal stretch at 1 to 22 (MWVALKRFGFLSGLLALTVLSA) is a signal peptide. C23 carries N-palmitoyl cysteine lipidation. A lipid anchor (S-diacylglycerol cysteine) is attached at C23.

The protein belongs to the MG067/MG068/MG395 family.

It is found in the cell membrane. This is an uncharacterized protein from Mycoplasma pneumoniae (strain ATCC 29342 / M129 / Subtype 1) (Mycoplasmoides pneumoniae).